Consider the following 336-residue polypeptide: HTH-type transcriptional regulator CdhR (336 aa).

The HTH araC/xylS-type domain maps to 213 to 311 (VQVIGEMERH…AASPSQDRAV (99 aa)). 2 DNA-binding regions (H-T-H motif) span residues 230 to 251 (LELAERIQVTRRQLERLFRVHL) and 278 to 301 (VLQVSLACGFESPSYFSRSYRARF). Residues 305 to 336 (PSQDRAVLPLKAPAATPPGAPAGHRTPRAERG) are disordered.

In terms of biological role, induces the transcription of the PA5384-PA5388 operon in response to carnitine. This operon is involved in the degradation of L-carnitine, and allows P.aeruginosa to grow on L-carnitine as the sole source of carbon and nitrogen. This Pseudomonas aeruginosa (strain ATCC 15692 / DSM 22644 / CIP 104116 / JCM 14847 / LMG 12228 / 1C / PRS 101 / PAO1) protein is HTH-type transcriptional regulator CdhR (cdhR).